Reading from the N-terminus, the 724-residue chain is Peroxidase mlt-7 (724 aa).

The N-terminal stretch at 1 to 24 is a signal peptide; the sequence is MRRLHRNLSLLFLICILNEYRIES. An N-linked (GlcNAc...) asparagine glycan is attached at Asn-7. The propeptide occupies 25–178; the sequence is QTLSPPITDR…GCVPQLSDVG (154 aa). Residues 42 to 76 form the ShKT domain; it reads CCDHHEWCRFWASIGECNANKDWMTENCQLACGTC. An intrachain disulfide couples Cys-181 to Cys-198. A glycan (N-linked (GlcNAc...) asparagine) is linked at Asn-233. His-271 acts as the Proton acceptor in catalysis. Asp-272 is a binding site for Ca(2+). Cys-284 and Cys-294 are joined by a disulfide. Ca(2+)-binding residues include Thr-335, Tyr-337, Asp-339, and Ser-341. Position 493 (His-493) interacts with heme b. N-linked (GlcNAc...) asparagine glycans are attached at residues Asn-509 and Asn-617. 2 disulfides stabilise this stretch: Cys-588/Cys-645 and Cys-686/Cys-710.

It belongs to the peroxidase family. Heme b is required as a cofactor. Expressed in the hypodermal cells, specifically the head and seam/body.

It catalyses the reaction 2 a phenolic donor + H2O2 = 2 a phenolic radical donor + 2 H2O. Its function is as follows. Plays an essential role in cuticle biogenesis. Required in combination with bli-3 for correct formation of cross-links in cuticle collagens. The sequence is that of Peroxidase mlt-7 from Caenorhabditis elegans.